The chain runs to 311 residues: Meteorin-like protein (311 aa).

The signal sequence occupies residues 1 to 45; the sequence is MRGVVWAARRRAGQQWPRSPGPGPGPPPPPPLLLLLLLLLGGASA. Residues Cys52 and Cys75 are joined by a disulfide bond. Residue Asn103 is glycosylated (N-linked (GlcNAc...) asparagine). Cystine bridges form between Cys107-Cys143, Cys188-Cys260, Cys191-Cys284, and Cys201-Cys306.

It belongs to the meteorin family. As to expression, abundantly expressed in adipose tissue.

The protein resides in the secreted. Functionally, hormone induced following exercise or cold exposure that promotes energy expenditure. Induced either in the skeletal muscle after exercise or in adipose tissue following cold exposure and is present in the circulation. Able to stimulate energy expenditure associated with the browning of the white fat depots and improves glucose tolerance. Does not promote an increase in a thermogenic gene program via direct action on adipocytes, but acts by stimulating several immune cell subtypes to enter the adipose tissue and activate their prothermogenic actions. Stimulates an eosinophil-dependent increase in IL4 expression and promotes alternative activation of adipose tissue macrophages, which are required for the increased expression of the thermogenic and anti-inflammatory gene programs in fat. Required for some cold-induced thermogenic responses, suggesting a role in metabolic adaptations to cold temperatures. This Rattus norvegicus (Rat) protein is Meteorin-like protein (Metrnl).